The sequence spans 166 residues: Chorion protein S18 (166 aa).

The N-terminal stretch at 1–17 (MMKFMCLFVCAIAAVSA) is a signal peptide.

It belongs to the chorion protein S15/S18 family.

It is found in the secreted. Functionally, chorion membrane (egg shell) protein; plays a role in protecting the egg from the environment. The polypeptide is Chorion protein S18 (Cp18) (Drosophila grimshawi (Hawaiian fruit fly)).